Reading from the N-terminus, the 383-residue chain is uncharacterized protein (383 aa).

Disordered stretches follow at residues 27 to 66 and 242 to 281; these read ENNN…NKKP and LITT…ITRR. Low complexity-rich tracts occupy residues 28–63 and 242–275; these read NNNT…NNNN and LITT…KSSS.

This is an uncharacterized protein from Dictyostelium discoideum (Social amoeba).